We begin with the raw amino-acid sequence, 293 residues long: Formamidopyrimidine-DNA glycosylase (293 aa).

Catalysis depends on Pro-2, which acts as the Schiff-base intermediate with DNA. Glu-3 acts as the Proton donor in catalysis. The active-site Proton donor; for beta-elimination activity is the Lys-58. Positions 104, 127, and 170 each coordinate DNA. An FPG-type zinc finger spans residues 257–293 (SVYGREGKPCRNPACGGTVERVVQSGRSTFFCASCQT). Arg-283 functions as the Proton donor; for delta-elimination activity in the catalytic mechanism.

The protein belongs to the FPG family. Monomer. Requires Zn(2+) as cofactor.

The catalysed reaction is Hydrolysis of DNA containing ring-opened 7-methylguanine residues, releasing 2,6-diamino-4-hydroxy-5-(N-methyl)formamidopyrimidine.. It catalyses the reaction 2'-deoxyribonucleotide-(2'-deoxyribose 5'-phosphate)-2'-deoxyribonucleotide-DNA = a 3'-end 2'-deoxyribonucleotide-(2,3-dehydro-2,3-deoxyribose 5'-phosphate)-DNA + a 5'-end 5'-phospho-2'-deoxyribonucleoside-DNA + H(+). Involved in base excision repair of DNA damaged by oxidation or by mutagenic agents. Acts as a DNA glycosylase that recognizes and removes damaged bases. Has a preference for oxidized purines, such as 7,8-dihydro-8-oxoguanine (8-oxoG). Has AP (apurinic/apyrimidinic) lyase activity and introduces nicks in the DNA strand. Cleaves the DNA backbone by beta-delta elimination to generate a single-strand break at the site of the removed base with both 3'- and 5'-phosphates. This Brucella melitensis biotype 1 (strain ATCC 23456 / CCUG 17765 / NCTC 10094 / 16M) protein is Formamidopyrimidine-DNA glycosylase.